Consider the following 196-residue polypeptide: Nucleoside triphosphate pyrophosphatase (196 aa).

The active-site Proton acceptor is D73.

This sequence belongs to the Maf family. A divalent metal cation serves as cofactor.

It is found in the cytoplasm. The catalysed reaction is a ribonucleoside 5'-triphosphate + H2O = a ribonucleoside 5'-phosphate + diphosphate + H(+). It carries out the reaction a 2'-deoxyribonucleoside 5'-triphosphate + H2O = a 2'-deoxyribonucleoside 5'-phosphate + diphosphate + H(+). In terms of biological role, nucleoside triphosphate pyrophosphatase. May have a dual role in cell division arrest and in preventing the incorporation of modified nucleotides into cellular nucleic acids. This chain is Nucleoside triphosphate pyrophosphatase, found in Maricaulis maris (strain MCS10) (Caulobacter maris).